Here is a 568-residue protein sequence, read N- to C-terminus: Proline--tRNA ligase (568 aa).

Belongs to the class-II aminoacyl-tRNA synthetase family. ProS type 1 subfamily. As to quaternary structure, homodimer.

Its subcellular location is the cytoplasm. It carries out the reaction tRNA(Pro) + L-proline + ATP = L-prolyl-tRNA(Pro) + AMP + diphosphate. In terms of biological role, catalyzes the attachment of proline to tRNA(Pro) in a two-step reaction: proline is first activated by ATP to form Pro-AMP and then transferred to the acceptor end of tRNA(Pro). As ProRS can inadvertently accommodate and process non-cognate amino acids such as alanine and cysteine, to avoid such errors it has two additional distinct editing activities against alanine. One activity is designated as 'pretransfer' editing and involves the tRNA(Pro)-independent hydrolysis of activated Ala-AMP. The other activity is designated 'posttransfer' editing and involves deacylation of mischarged Ala-tRNA(Pro). The misacylated Cys-tRNA(Pro) is not edited by ProRS. The polypeptide is Proline--tRNA ligase (Listeria innocua serovar 6a (strain ATCC BAA-680 / CLIP 11262)).